A 524-amino-acid polypeptide reads, in one-letter code: Probable glycine dehydrogenase (decarboxylating) subunit 2 (524 aa).

Position 296 is an N6-(pyridoxal phosphate)lysine (Lys-296).

This sequence belongs to the GcvP family. C-terminal subunit subfamily. In terms of assembly, the glycine cleavage system is composed of four proteins: P, T, L and H. In this organism, the P 'protein' is a heterodimer of two subunits. Pyridoxal 5'-phosphate serves as cofactor.

The enzyme catalyses N(6)-[(R)-lipoyl]-L-lysyl-[glycine-cleavage complex H protein] + glycine + H(+) = N(6)-[(R)-S(8)-aminomethyldihydrolipoyl]-L-lysyl-[glycine-cleavage complex H protein] + CO2. The glycine cleavage system catalyzes the degradation of glycine. The P protein binds the alpha-amino group of glycine through its pyridoxal phosphate cofactor; CO(2) is released and the remaining methylamine moiety is then transferred to the lipoamide cofactor of the H protein. The sequence is that of Probable glycine dehydrogenase (decarboxylating) subunit 2 from Caulobacter vibrioides (strain ATCC 19089 / CIP 103742 / CB 15) (Caulobacter crescentus).